We begin with the raw amino-acid sequence, 406 residues long: MYTPNDSMREEISLKVFVNHDWSKLCPDILRSILESLSSTDFHRAKTVCSDWYSNWKTCVKPLCPWRIMYVKDSLMLFKPGEDKIYKGTNVGLSNDSYYMASSGNWLLMVDSHLGFYIFNLLTSKRIDLPSMESSIRGGKVRFEQNHEHGFNWGHFVEPSRKVTVSKITITRESRAVLWIDERTGDFVVAWIFNYRYLFSYKKGDDSWWNWNNHWNMESLNLSFLDLAYRNSKLYIYITKSHIKVVDFSGNDPIEVIDKNPYWEHPFRYLTKKGEYINKRRIAIQKSGDVLIILSVLAQRSKEKVLFYIFKMNLASKIWERVESIGDDEMLIFGHGVTIRAPVQDVGDGIKSGSICFVSDVWPPYYSPAATNWGVFDLATSIIKWSKKDSFNNRYVQTYLFFPGFA.

The 48-residue stretch at 20–67 (HDWSKLCPDILRSILESLSSTDFHRAKTVCSDWYSNWKTCVKPLCPWR) folds into the F-box domain.

The chain is Putative F-box protein At5g38270 from Arabidopsis thaliana (Mouse-ear cress).